Here is a 202-residue protein sequence, read N- to C-terminus: Holliday junction branch migration complex subunit RuvA (202 aa).

A domain I region spans residues 1-64 (MFAYIRGRLE…EDVISLYGFL (64 aa)). The interval 65 to 143 (TQEELNVFEL…KEQLTEYAQS (79 aa)) is domain II. A flexible linker region spans residues 144 to 152 (EEGGKVLDT). Positions 152 to 202 (TDSSKMAEAVSALMVLGYSPAEANKAVSAVYREDMDIETIIKNALKGLARP) are domain III.

It belongs to the RuvA family. In terms of assembly, homotetramer. Forms an RuvA(8)-RuvB(12)-Holliday junction (HJ) complex. HJ DNA is sandwiched between 2 RuvA tetramers; dsDNA enters through RuvA and exits via RuvB. An RuvB hexamer assembles on each DNA strand where it exits the tetramer. Each RuvB hexamer is contacted by two RuvA subunits (via domain III) on 2 adjacent RuvB subunits; this complex drives branch migration. In the full resolvosome a probable DNA-RuvA(4)-RuvB(12)-RuvC(2) complex forms which resolves the HJ.

It is found in the cytoplasm. Functionally, the RuvA-RuvB-RuvC complex processes Holliday junction (HJ) DNA during genetic recombination and DNA repair, while the RuvA-RuvB complex plays an important role in the rescue of blocked DNA replication forks via replication fork reversal (RFR). RuvA specifically binds to HJ cruciform DNA, conferring on it an open structure. The RuvB hexamer acts as an ATP-dependent pump, pulling dsDNA into and through the RuvAB complex. HJ branch migration allows RuvC to scan DNA until it finds its consensus sequence, where it cleaves and resolves the cruciform DNA. This chain is Holliday junction branch migration complex subunit RuvA, found in Acetivibrio thermocellus (strain ATCC 27405 / DSM 1237 / JCM 9322 / NBRC 103400 / NCIMB 10682 / NRRL B-4536 / VPI 7372) (Clostridium thermocellum).